The primary structure comprises 424 residues: 3-phosphoshikimate 1-carboxyvinyltransferase (424 aa).

3-phosphoshikimate contacts are provided by K21, S22, and R26. K21 serves as a coordination point for phosphoenolpyruvate. G91 and R119 together coordinate phosphoenolpyruvate. 3-phosphoshikimate-binding residues include S164, Q166, D310, and K337. Q166 serves as a coordination point for phosphoenolpyruvate. The active-site Proton acceptor is the D310. R341 and R382 together coordinate phosphoenolpyruvate.

Belongs to the EPSP synthase family. As to quaternary structure, monomer.

It localises to the cytoplasm. It carries out the reaction 3-phosphoshikimate + phosphoenolpyruvate = 5-O-(1-carboxyvinyl)-3-phosphoshikimate + phosphate. It functions in the pathway metabolic intermediate biosynthesis; chorismate biosynthesis; chorismate from D-erythrose 4-phosphate and phosphoenolpyruvate: step 6/7. Functionally, catalyzes the transfer of the enolpyruvyl moiety of phosphoenolpyruvate (PEP) to the 5-hydroxyl of shikimate-3-phosphate (S3P) to produce enolpyruvyl shikimate-3-phosphate and inorganic phosphate. The chain is 3-phosphoshikimate 1-carboxyvinyltransferase from Campylobacter hominis (strain ATCC BAA-381 / DSM 21671 / CCUG 45161 / LMG 19568 / NCTC 13146 / CH001A).